The primary structure comprises 208 residues: Small ribosomal subunit protein uS4 (208 aa).

The region spanning 98 to 158 (RRLDNIVYRL…EKSRKVASIN (61 aa)) is the S4 RNA-binding domain.

Belongs to the universal ribosomal protein uS4 family. Part of the 30S ribosomal subunit. Contacts protein S5. The interaction surface between S4 and S5 is involved in control of translational fidelity.

Functionally, one of the primary rRNA binding proteins, it binds directly to 16S rRNA where it nucleates assembly of the body of the 30S subunit. In terms of biological role, with S5 and S12 plays an important role in translational accuracy. The protein is Small ribosomal subunit protein uS4 of Geotalea daltonii (strain DSM 22248 / JCM 15807 / FRC-32) (Geobacter daltonii).